Reading from the N-terminus, the 169-residue chain is MAETIRIIGIDPGLRRTGWGVIDFSGNRLQFVAAGTLTSDARCDLASRLCQLYKGLTDILHQFMPQEAAVEHVFVNKDATATLKLGQARAIALLAPAQANLPVFEYAPNKVKKSVIGVGHGDKEQIHMMVKVLLPRAEFDSSDAADALALALCHSTHRIGASYHARIMA.

Catalysis depends on residues D11, E71, and D143. Positions 11, 71, and 143 each coordinate Mg(2+).

It belongs to the RuvC family. As to quaternary structure, homodimer which binds Holliday junction (HJ) DNA. The HJ becomes 2-fold symmetrical on binding to RuvC with unstacked arms; it has a different conformation from HJ DNA in complex with RuvA. In the full resolvosome a probable DNA-RuvA(4)-RuvB(12)-RuvC(2) complex forms which resolves the HJ. Requires Mg(2+) as cofactor.

The protein resides in the cytoplasm. The catalysed reaction is Endonucleolytic cleavage at a junction such as a reciprocal single-stranded crossover between two homologous DNA duplexes (Holliday junction).. Its function is as follows. The RuvA-RuvB-RuvC complex processes Holliday junction (HJ) DNA during genetic recombination and DNA repair. Endonuclease that resolves HJ intermediates. Cleaves cruciform DNA by making single-stranded nicks across the HJ at symmetrical positions within the homologous arms, yielding a 5'-phosphate and a 3'-hydroxyl group; requires a central core of homology in the junction. The consensus cleavage sequence is 5'-(A/T)TT(C/G)-3'. Cleavage occurs on the 3'-side of the TT dinucleotide at the point of strand exchange. HJ branch migration catalyzed by RuvA-RuvB allows RuvC to scan DNA until it finds its consensus sequence, where it cleaves and resolves the cruciform DNA. This is Crossover junction endodeoxyribonuclease RuvC from Bartonella henselae (strain ATCC 49882 / DSM 28221 / CCUG 30454 / Houston 1) (Rochalimaea henselae).